The following is a 208-amino-acid chain: Imidazoleglycerol-phosphate dehydratase (208 aa).

This sequence belongs to the imidazoleglycerol-phosphate dehydratase family.

Its subcellular location is the cytoplasm. It carries out the reaction D-erythro-1-(imidazol-4-yl)glycerol 3-phosphate = 3-(imidazol-4-yl)-2-oxopropyl phosphate + H2O. It functions in the pathway amino-acid biosynthesis; L-histidine biosynthesis; L-histidine from 5-phospho-alpha-D-ribose 1-diphosphate: step 6/9. This is Imidazoleglycerol-phosphate dehydratase from Psychrobacter sp. (strain PRwf-1).